Here is a 415-residue protein sequence, read N- to C-terminus: Gamma-glutamyl phosphate reductase (415 aa).

It belongs to the gamma-glutamyl phosphate reductase family.

Its subcellular location is the cytoplasm. It catalyses the reaction L-glutamate 5-semialdehyde + phosphate + NADP(+) = L-glutamyl 5-phosphate + NADPH + H(+). Its pathway is amino-acid biosynthesis; L-proline biosynthesis; L-glutamate 5-semialdehyde from L-glutamate: step 2/2. Catalyzes the NADPH-dependent reduction of L-glutamate 5-phosphate into L-glutamate 5-semialdehyde and phosphate. The product spontaneously undergoes cyclization to form 1-pyrroline-5-carboxylate. The protein is Gamma-glutamyl phosphate reductase of Salmonella dublin (strain CT_02021853).